The primary structure comprises 126 residues: Histone H2B type 1-M (126 aa).

The disordered stretch occupies residues 1-36 (MPEPVKSAPVPKKGSKKAINKAQKKDGKKRKRSRKE). The residue at position 2 (Pro-2) is an N-acetylproline. Glu-3 is subject to ADP-ribosyl glutamic acid. An N6-(2-hydroxyisobutyryl)lysine; alternate modification is found at Lys-6. Lys-6 is modified (N6-(beta-hydroxybutyryl)lysine; alternate). Position 6 is an N6-acetyllysine; alternate (Lys-6). An N6-butyryllysine; alternate modification is found at Lys-6. N6-crotonyllysine; alternate is present on Lys-6. At Lys-6 the chain carries N6-lactoyllysine; alternate. Residue Lys-6 forms a Glycyl lysine isopeptide (Lys-Gly) (interchain with G-Cter in SUMO2); alternate linkage. ADP-ribosylserine is present on Ser-7. Lys-12 is subject to N6-(beta-hydroxybutyryl)lysine; alternate. Residues Lys-12 and Lys-13 each carry the N6-acetyllysine; alternate modification. N6-crotonyllysine; alternate occurs at positions 12 and 13. Lys-12 carries the N6-lactoyllysine; alternate modification. An N6-(2-hydroxyisobutyryl)lysine; alternate modification is found at Lys-13. Ser-15 is modified (phosphoserine; by STK4/MST1). An N6-acetyllysine; alternate mark is found at Lys-16, Lys-17, Lys-21, and Lys-24. N6-crotonyllysine; alternate occurs at positions 16, 17, 21, and 24. 4 positions are modified to N6-lactoyllysine; alternate: Lys-16, Lys-17, Lys-21, and Lys-24. Lys-17 and Lys-21 each carry N6-(beta-hydroxybutyryl)lysine; alternate. Position 17 is an N6-glutaryllysine; alternate (Lys-17). 2 positions are modified to N6-(2-hydroxyisobutyryl)lysine; alternate: Lys-21 and Lys-24. Residue Lys-21 is modified to N6-butyryllysine; alternate. A Glycyl lysine isopeptide (Lys-Gly) (interchain with G-Cter in SUMO2); alternate cross-link involves residue Lys-21. At Lys-25 the chain carries N6-(2-hydroxyisobutyryl)lysine. Lys-35 carries the N6-(2-hydroxyisobutyryl)lysine; alternate modification. N6-(beta-hydroxybutyryl)lysine; alternate is present on Lys-35. Lys-35 bears the N6-crotonyllysine; alternate mark. Residue Lys-35 is modified to N6-glutaryllysine; alternate. At Lys-35 the chain carries N6-succinyllysine; alternate. A Glycyl lysine isopeptide (Lys-Gly) (interchain with G-Cter in ubiquitin); alternate cross-link involves residue Lys-35. Glu-36 carries the polyADP-ribosyl glutamic acid modification. The residue at position 37 (Ser-37) is a Phosphoserine; by AMPK. An N6-(2-hydroxyisobutyryl)lysine; alternate mark is found at Lys-44, Lys-47, and Lys-58. Lys-44 carries the N6-lactoyllysine; alternate modification. Residues Lys-44 and Lys-47 each carry the N6-glutaryllysine; alternate modification. N6-methyllysine; alternate is present on Lys-47. N6,N6-dimethyllysine; alternate is present on Lys-58. Arg-80 bears the Dimethylated arginine mark. Lys-86 carries the N6-(2-hydroxyisobutyryl)lysine; alternate modification. An N6-(beta-hydroxybutyryl)lysine; alternate modification is found at Lys-86. Lys-86 is modified (N6-acetyllysine; alternate). Lys-86 is subject to N6-lactoyllysine; alternate. Position 86 is an N6,N6,N6-trimethyllysine; alternate (Lys-86). An omega-N-methylarginine mark is found at Arg-87 and Arg-93. Lys-109 is subject to N6-(2-hydroxyisobutyryl)lysine; alternate. Residue Lys-109 is modified to N6-lactoyllysine; alternate. An N6-glutaryllysine; alternate modification is found at Lys-109. Lys-109 bears the N6-methyllysine; alternate mark. The O-linked (GlcNAc) serine glycan is linked to Ser-113. At Thr-116 the chain carries Phosphothreonine. N6-(2-hydroxyisobutyryl)lysine; alternate is present on residues Lys-117 and Lys-121. Lys-117 and Lys-121 each carry N6-(beta-hydroxybutyryl)lysine; alternate. N6-lactoyllysine; alternate is present on residues Lys-117 and Lys-121. 2 positions are modified to N6-glutaryllysine; alternate: Lys-117 and Lys-121. N6-succinyllysine; alternate occurs at positions 117 and 121. Lys-117 is modified (N6-malonyllysine; alternate). An N6-methylated lysine; alternate modification is found at Lys-117. Lys-121 participates in a covalent cross-link: Glycyl lysine isopeptide (Lys-Gly) (interchain with G-Cter in ubiquitin); alternate.

This sequence belongs to the histone H2B family. In terms of assembly, the nucleosome is a histone octamer containing two molecules each of H2A, H2B, H3 and H4 assembled in one H3-H4 heterotetramer and two H2A-H2B heterodimers. The octamer wraps approximately 147 bp of DNA. In terms of processing, monoubiquitination at Lys-35 (H2BK34Ub) by the MSL1/MSL2 dimer is required for histone H3 'Lys-4' (H3K4me) and 'Lys-79' (H3K79me) methylation and transcription activation at specific gene loci, such as HOXA9 and MEIS1 loci. Similarly, monoubiquitination at Lys-121 (H2BK120Ub) by the RNF20/40 complex gives a specific tag for epigenetic transcriptional activation and is also prerequisite for histone H3 'Lys-4' and 'Lys-79' methylation. It also functions cooperatively with the FACT dimer to stimulate elongation by RNA polymerase II. H2BK120Ub also acts as a regulator of mRNA splicing: deubiquitination by USP49 is required for efficient cotranscriptional splicing of a large set of exons. Phosphorylation at Ser-37 (H2BS36ph) by AMPK in response to stress promotes transcription. Phosphorylated on Ser-15 (H2BS14ph) by STK4/MST1 during apoptosis; which facilitates apoptotic chromatin condensation. Also phosphorylated on Ser-15 in response to DNA double strand breaks (DSBs), and in correlation with somatic hypermutation and immunoglobulin class-switch recombination. Post-translationally, glcNAcylation at Ser-113 promotes monoubiquitination of Lys-121. It fluctuates in response to extracellular glucose, and associates with transcribed genes. In terms of processing, ADP-ribosylated by PARP1 or PARP2 on Ser-7 (H2BS6ADPr) in response to DNA damage. H2BS6ADPr promotes recruitment of CHD1L. Mono-ADP-ribosylated on Glu-3 (H2BE2ADPr) by PARP3 in response to single-strand breaks. Poly ADP-ribosylation on Glu-36 (H2BE35ADPr) by PARP1 regulates adipogenesis: it inhibits phosphorylation at Ser-37 (H2BS36ph), thereby blocking expression of pro-adipogenetic genes. Crotonylation (Kcr) is specifically present in male germ cells and marks testis-specific genes in post-meiotic cells, including X-linked genes that escape sex chromosome inactivation in haploid cells. Crotonylation marks active promoters and enhancers and confers resistance to transcriptional repressors. It is also associated with post-meiotically activated genes on autosomes. Post-translationally, lactylated in macrophages by EP300/P300 by using lactoyl-CoA directly derived from endogenous or exogenous lactate, leading to stimulates gene transcription.

The protein localises to the nucleus. It localises to the chromosome. Core component of nucleosome. Nucleosomes wrap and compact DNA into chromatin, limiting DNA accessibility to the cellular machineries which require DNA as a template. Histones thereby play a central role in transcription regulation, DNA repair, DNA replication and chromosomal stability. DNA accessibility is regulated via a complex set of post-translational modifications of histones, also called histone code, and nucleosome remodeling. In Homo sapiens (Human), this protein is Histone H2B type 1-M.